The chain runs to 506 residues: Maturase K (506 aa).

Belongs to the intron maturase 2 family. MatK subfamily.

The protein resides in the plastid. It localises to the chloroplast. Its function is as follows. Usually encoded in the trnK tRNA gene intron. Probably assists in splicing its own and other chloroplast group II introns. The sequence is that of Maturase K from Lactuca sativa (Garden lettuce).